The following is a 94-amino-acid chain: DNA-binding protein HU (94 aa).

It belongs to the bacterial histone-like protein family. In terms of assembly, homodimer.

Its function is as follows. Histone-like DNA-binding protein which is capable of wrapping DNA to stabilize it, and thus to prevent its denaturation under extreme environmental conditions. This Helicobacter pylori (strain J99 / ATCC 700824) (Campylobacter pylori J99) protein is DNA-binding protein HU (hup).